We begin with the raw amino-acid sequence, 255 residues long: Segregation and condensation protein A (255 aa).

The protein belongs to the ScpA family. Component of a cohesin-like complex composed of ScpA, ScpB and the Smc homodimer, in which ScpA and ScpB bind to the head domain of Smc. The presence of the three proteins is required for the association of the complex with DNA.

Its subcellular location is the cytoplasm. Participates in chromosomal partition during cell division. May act via the formation of a condensin-like complex containing Smc and ScpB that pull DNA away from mid-cell into both cell halves. In Lactiplantibacillus plantarum (strain ATCC BAA-793 / NCIMB 8826 / WCFS1) (Lactobacillus plantarum), this protein is Segregation and condensation protein A.